A 78-amino-acid chain; its full sequence is MTVSTGIWILIVVIGVLVGLTGGFFGARHYMQNYLKQNPPISEEMLRSMMMQMGQRPSEKKLHQMLNSMKAASKNDNK.

A helical membrane pass occupies residues 5 to 27 (TGIWILIVVIGVLVGLTGGFFGA).

It belongs to the UPF0154 family.

It is found in the membrane. This is UPF0154 protein lp_2061 from Lactiplantibacillus plantarum (strain ATCC BAA-793 / NCIMB 8826 / WCFS1) (Lactobacillus plantarum).